A 386-amino-acid chain; its full sequence is Indole-3-acetate O-methyltransferase 1 (386 aa).

Y30 is an S-adenosyl-L-methionine binding site. Residues Y30 and 33 to 37 each bind substrate; that span reads NSQAQ. S-adenosyl-L-methionine contacts are provided by residues G72, 72-73, N78, 108-111, D110, 152-154, and 169-171; these read GC, FSDL, SFY, and AFS. 170–174 serves as a coordination point for substrate; sequence FSLHW. The Mg(2+) site is built by N191, V195, R277, D278, F280, and N281. Position 334 (S334) interacts with substrate.

The protein belongs to the methyltransferase superfamily. SABATH family. In terms of assembly, homodimer. It depends on Mg(2+) as a cofactor. In terms of tissue distribution, expressed in seedling roots and leaves. Expressed in the stigma, funiculus, and vascular bundles in sepals, petals and stamens.

The enzyme catalyses (indol-3-yl)acetate + S-adenosyl-L-methionine = methyl (indol-3-yl)acetate + S-adenosyl-L-homocysteine. Functionally, catalyzes the methylation of the free carboxyl end of the plant hormone indole-3-acetic acid (IAA). Converts IAA to IAA methyl ester (MeIAA). Regulates IAA activities by IAA methylation. Methylation of IAA plays an important role in regulating plant development and auxin homeostasis. Required for correct leaf pattern formation. MeIAA seems to be an inactive form of IAA. The polypeptide is Indole-3-acetate O-methyltransferase 1 (IAMT1) (Arabidopsis thaliana (Mouse-ear cress)).